The chain runs to 358 residues: Trace amine-associated receptor 7d (358 aa).

Over 1 to 47 the chain is Extracellular; it reads MATGDDSFPWDQDSILSRDLFSATSTELCYENLNRSCVRSPYSPGPR. N-linked (GlcNAc...) asparagine glycosylation occurs at Asn34. 2 cysteine pairs are disulfide-bonded: Cys37–Cys201 and Cys120–Cys205. A helical membrane pass occupies residues 48–68; that stretch reads LILYAVFGFGAVLAVCGNLLV. Residues 69-83 are Cytoplasmic-facing; the sequence is MTSILHFRQLHSPAN. Residues 84–104 traverse the membrane as a helical segment; sequence FLVASLACADFLVGVMVMPFS. The Extracellular portion of the chain corresponds to 105–121; it reads MVRSVEGCWYFGESYCK. Residues 122–143 form a helical membrane-spanning segment; the sequence is FHSCFEGSFCYSSLFHLCFISV. The Cytoplasmic portion of the chain corresponds to 144-166; it reads DRYIAVSDPLTYPTRFTASVSGK. A helical transmembrane segment spans residues 167 to 187; that stretch reads CITFSWLLSIIYSFSLLYTGA. The Extracellular segment spans residues 188 to 212; sequence NDAGLEDLVSALTCVGGCQIAVNQT. Asn210 is a glycosylation site (N-linked (GlcNAc...) asparagine). Residues 213-233 form a helical membrane-spanning segment; the sequence is WVFINFLLFLIPTLVMITVYS. Residues 234 to 274 lie on the Cytoplasmic side of the membrane; sequence KIFLIAKQQAQNIEKMSKQTARASESYKDRVTKRERKAAKT. A helical membrane pass occupies residues 275–295; sequence LGIAVAAFLLSWLPYFIDSII. The Extracellular segment spans residues 296-309; it reads DAFLGFITPTYVYE. Residues 310–333 form a helical membrane-spanning segment; it reads ILVWIVYYNSAMNPLIYAFFYSWF. The Cytoplasmic portion of the chain corresponds to 334–358; that stretch reads RKAIKLIVSGKILRENSSTTNLFPE.

Belongs to the G-protein coupled receptor 1 family. In terms of tissue distribution, specifically expressed in neurons of the olfactory epithelium.

Its subcellular location is the cell membrane. Functionally, olfactory receptor specific for trace amines, such as beta-phenylethylamine (beta-PEA). Trace amine compounds are enriched in animal body fluids and act on trace amine-associated receptors (TAARs) to elicit both intraspecific and interspecific innate behaviors. Ligand-binding causes a conformation change that triggers signaling via G(s)-class of G alpha proteins (GNAL or GNAS). The sequence is that of Trace amine-associated receptor 7d from Mus musculus (Mouse).